The chain runs to 338 residues: MAHTAAERPPEETLSLWKGEQARLKARVVDRDTEAWQRDPSFSGLQKVGGVDVSFVKGDSVRACASLVVLSYPELKVVYEDSRMVGLKAPYVSGFLAFREVPFLVELVQRLQEKEPDLMPQVVLVDGNGVLHQRGFGVACHLGVLTELPCIGVAKKLLQVDGLENNALHKEKIVLLQAGGDTFPLIGSSGTVLGMALRSHDHSTKPLYVSVGHRISLEVAVRLTHHCCRFRIPEPIRQADIRSREYIRRTLGQLGVAPAQRKDRSQKEQRPNACPQGGPGALADQGRPPECDGRDSSSDRKAPEPGFQEQKDQQLEGTGHQEDSDLWPPSPAWVQSPP.

Positions 52 and 126 each coordinate Mg(2+). The interval 253–338 is disordered; it reads QLGVAPAQRK…PSPAWVQSPP (86 aa). 2 stretches are compositionally biased toward basic and acidic residues: residues 260-270 and 287-323; these read QRKDRSQKEQR and RPPECDGRDSSSDRKAPEPGFQEQKDQQLEGTGHQED. The segment covering 328-338 has biased composition (pro residues); it reads PPSPAWVQSPP.

Belongs to the endonuclease V family. In terms of assembly, monomer. Interacts with PABPC1; the interaction is RNA-dependent and stimulates ENDOV activity. Mg(2+) is required as a cofactor. Highest levels detected in liver with high levels also found in heart, kidney and testis. Expressed at low levels in brain.

Its subcellular location is the cytoplasm. The protein localises to the nucleus. The protein resides in the nucleolus. It is found in the stress granule. Functionally, endoribonuclease that specifically cleaves inosine-containing RNAs: cleaves RNA at the second phosphodiester bond 3' to inosine. Active against both single-stranded and double-stranded RNAs. Has strong preference for single-stranded RNAs (ssRNAs) toward double-stranded RNAs (dsRNAs). Cleaves mRNAs and tRNAs containing inosine. Also able to cleave structure-specific dsRNA substrates containing the specific sites 5'-IIUI-3' and 5'-UIUU-3'. Inosine is present in a number of RNAs following editing; the function of inosine-specific endoribonuclease is still unclear: it could either play a regulatory role in edited RNAs, or be involved in antiviral response by removing the hyperedited long viral dsRNA genome that has undergone A-to-I editing. Binds branched DNA structures. In Mus musculus (Mouse), this protein is Endonuclease V (Endov).